Here is a 1363-residue protein sequence, read N- to C-terminus: DNA-directed RNA polymerase subunit beta (1363 aa).

This sequence belongs to the RNA polymerase beta chain family. In terms of assembly, the RNAP catalytic core consists of 2 alpha, 1 beta, 1 beta' and 1 omega subunit. When a sigma factor is associated with the core the holoenzyme is formed, which can initiate transcription.

It carries out the reaction RNA(n) + a ribonucleoside 5'-triphosphate = RNA(n+1) + diphosphate. Its function is as follows. DNA-dependent RNA polymerase catalyzes the transcription of DNA into RNA using the four ribonucleoside triphosphates as substrates. The polypeptide is DNA-directed RNA polymerase subunit beta (Neorickettsia risticii (Ehrlichia risticii)).